Consider the following 590-residue polypeptide: L-asparaginase (590 aa).

The 352-residue stretch at 6 to 357 (AHVLVLYTGG…VEKKAMMVKN (352 aa)) folds into the Asparaginase/glutaminase domain. T16 (O-isoaspartyl threonine intermediate) is an active-site residue. Residues 44-351 (NDDDYVSTYY…KDCWELVEKK (308 aa)) are asparaginase. Substrate-binding positions include 85 to 87 (DSS) and 117 to 118 (TD). 4 ANK repeats span residues 398-427 (IFPQ…DLSV), 431-460 (NGRN…SFHL), 497-526 (RLGV…DINQ), and 530-559 (NGET…DPYK).

It in the N-terminal section; belongs to the asparaginase 1 family. In terms of tissue distribution, may be present in the larval cuticle.

The enzyme catalyses L-asparagine + H2O = L-aspartate + NH4(+). This Dirofilaria immitis (Canine heartworm) protein is L-asparaginase.